A 101-amino-acid polypeptide reads, in one-letter code: uncharacterized protein (101 aa).

This is an uncharacterized protein from Mycobacterium tuberculosis (strain CDC 1551 / Oshkosh).